We begin with the raw amino-acid sequence, 670 residues long: DNA ligase (670 aa).

NAD(+) is bound by residues 36 to 40 (DEEYD), 84 to 85 (SL), and Glu-116. Lys-118 (N6-AMP-lysine intermediate) is an active-site residue. NAD(+) is bound by residues Arg-139, Glu-177, Lys-293, and Lys-317. Positions 411, 414, 429, and 434 each coordinate Zn(2+). The BRCT domain maps to 594–670 (KKPSPLKGLT…SYEEFLKMLE (77 aa)).

The protein belongs to the NAD-dependent DNA ligase family. LigA subfamily. The cofactor is Mg(2+). Mn(2+) is required as a cofactor.

The catalysed reaction is NAD(+) + (deoxyribonucleotide)n-3'-hydroxyl + 5'-phospho-(deoxyribonucleotide)m = (deoxyribonucleotide)n+m + AMP + beta-nicotinamide D-nucleotide.. Functionally, DNA ligase that catalyzes the formation of phosphodiester linkages between 5'-phosphoryl and 3'-hydroxyl groups in double-stranded DNA using NAD as a coenzyme and as the energy source for the reaction. It is essential for DNA replication and repair of damaged DNA. This Thermodesulfovibrio yellowstonii (strain ATCC 51303 / DSM 11347 / YP87) protein is DNA ligase.